Here is a 502-residue protein sequence, read N- to C-terminus: Glycerol kinase (502 aa).

T14 lines the ADP pocket. 3 residues coordinate ATP: T14, T15, and S16. T14 is a sn-glycerol 3-phosphate binding site. R18 contacts ADP. Positions 84, 85, 136, and 246 each coordinate sn-glycerol 3-phosphate. Positions 84, 85, 136, 246, and 247 each coordinate glycerol. T268 and G311 together coordinate ADP. Positions 268, 311, 315, and 412 each coordinate ATP. ADP is bound by residues G412 and N416.

The protein belongs to the FGGY kinase family. In terms of assembly, homotetramer and homodimer (in equilibrium). Heterodimer with EIIA-Glc. Binds 1 zinc ion per glycerol kinase EIIA-Glc dimer. The zinc ion is important for dimerization.

It catalyses the reaction glycerol + ATP = sn-glycerol 3-phosphate + ADP + H(+). The protein operates within polyol metabolism; glycerol degradation via glycerol kinase pathway; sn-glycerol 3-phosphate from glycerol: step 1/1. Its activity is regulated as follows. Activity of this regulatory enzyme is affected by several metabolites. Allosterically and non-competitively inhibited by fructose 1,6-bisphosphate (FBP) and unphosphorylated phosphocarrier protein EIIA-Glc (III-Glc), an integral component of the bacterial phosphotransferase (PTS) system. Key enzyme in the regulation of glycerol uptake and metabolism. Catalyzes the phosphorylation of glycerol to yield sn-glycerol 3-phosphate. The chain is Glycerol kinase from Salmonella typhimurium (strain LT2 / SGSC1412 / ATCC 700720).